A 485-amino-acid polypeptide reads, in one-letter code: MSLFDHSVSELHTLLQKKEVSISDLVDESYRRIGEVEEKVQAFLTLNEEQARAKAKELDDQLAKGEETNPLFGLPIGIKDNIVTKGLRTTCAIKILYNFDPIYDATVMERLNAAGAITIGKLNMDEFAMGSSTENSGFQLTRNPWDLKRVPGGSSGGSAAAVAAGEVPFALGSDTGGSIRQPAAFCGVVGLKPTYGRVSRFGLVAFASSLDQIGPITRTVEDNAYLLQAIAGVDPMDSTSANVPVPNYVEALTGDIKGLKIAVPNEYLGEGVDEGVRQSVLAALAVLEKLGATWEEVSLPHSKYALATYYLLASSEASANLARFDGVRYGYRTDNAKNLIDMYKLTRSEGFGAEVKRRIMLGTFALSSGYYDAYYKKAQKVRTLIKRDFENVFERYDVIIGPTTPTPAFKIGEKTSDPLTMYANDILTIPVNLAGVPAISVPCGFVDGLPVGLQIIGKHFDESTVYRVAHAFEQATDYHKQKPVL.

Active-site charge relay system residues include Lys-79 and Ser-154. Residue Ser-178 is the Acyl-ester intermediate of the active site.

This sequence belongs to the amidase family. GatA subfamily. Heterotrimer of A, B and C subunits.

The catalysed reaction is L-glutamyl-tRNA(Gln) + L-glutamine + ATP + H2O = L-glutaminyl-tRNA(Gln) + L-glutamate + ADP + phosphate + H(+). Allows the formation of correctly charged Gln-tRNA(Gln) through the transamidation of misacylated Glu-tRNA(Gln) in organisms which lack glutaminyl-tRNA synthetase. The reaction takes place in the presence of glutamine and ATP through an activated gamma-phospho-Glu-tRNA(Gln). The chain is Glutamyl-tRNA(Gln) amidotransferase subunit A from Geobacillus stearothermophilus (Bacillus stearothermophilus).